The primary structure comprises 469 residues: Calcium-binding mitochondrial carrier protein SCaMC-2-B (469 aa).

At 1–189 the chain is on the mitochondrial intermembrane side; it reads MLCLCLYVPV…EKNTGMWWRH (189 aa). EF-hand domains are found at residues 47–80, 78–113, and 114–149; these read SYRKWRKKVVKAGDKDLDGQLDFEEFVHYLRDHE, DHEKKLRLVFKSLDKKNDGHIDSQEIMQSLRDLGVH, and ISEEQAEKILKSMDKNGTMTIDWNEWRDYHLLHPAE. Ca(2+) is bound by residues aspartate 60, aspartate 62, aspartate 64, glutamine 66, and glutamate 71. 3 Solcar repeats span residues 184-270, 278-363, and 375-463; these read GMWW…IKRL, LGIL…LKNS, and PGVF…LKIT. The helical transmembrane segment at 190-207 threads the bilayer; sequence LVAGGGAGAVSRTCTAPL. Residues 208-244 lie on the Mitochondrial matrix side of the membrane; it reads DRLKVLMQVHATRSNSMGIAGGFTQMIREGGLRSLWR. The chain crosses the membrane as a helical span at residues 245–264; the sequence is GNGINVLKIAPESAIKFMAY. Residues 265–287 lie on the Mitochondrial intermembrane side of the membrane; the sequence is EQIKRLIGSNQETLGILERLVSG. Residues 288-301 form a helical membrane-spanning segment; that stretch reads SLAGAIAQSSIYPM. The Mitochondrial matrix portion of the chain corresponds to 302-337; that stretch reads EVLKTRLALGRTGQYSGIADCAKHIFKKEGMTAFYK. The chain crosses the membrane as a helical span at residues 338-357; sequence GYIPNMLGIIPYAGIDLAVY. Over 358–380 the chain is Mitochondrial intermembrane; it reads ETLKNSWLQRFATDSADPGVFVL. Residues 381 to 398 traverse the membrane as a helical segment; the sequence is LACGTMSSTCGQLASYPL. The Mitochondrial matrix segment spans residues 399–437; the sequence is ALVRTRMQAQASQEGSPQMTMSGLFRHIVRTEGAIGLYR. The helical transmembrane segment at 438–457 threads the bilayer; it reads GLAPNFMKVIPAVSISYVVY. Over 458–469 the chain is Mitochondrial intermembrane; the sequence is ENLKITLGVQSR.

It belongs to the mitochondrial carrier (TC 2.A.29) family.

The protein resides in the mitochondrion inner membrane. Functionally, calcium-dependent mitochondrial solute carrier. The chain is Calcium-binding mitochondrial carrier protein SCaMC-2-B (slc25a25b) from Danio rerio (Zebrafish).